Reading from the N-terminus, the 88-residue chain is MTLSLVLFLIGILGFILNRKNIILMIISIEIMLLAVTLLVLVSSYQFDDIMGQTYSIYIIAIAGAESAIGLGILVAYYRLRGNISLRT.

The next 2 helical transmembrane spans lie at 22–42 (IILM…LVLV) and 57–77 (IYII…LVAY).

Belongs to the complex I subunit 4L family.

The protein resides in the mitochondrion membrane. The catalysed reaction is a ubiquinone + NADH + 5 H(+)(in) = a ubiquinol + NAD(+) + 4 H(+)(out). Functionally, core subunit of the mitochondrial membrane respiratory chain NADH dehydrogenase (Complex I) that is believed to belong to the minimal assembly required for catalysis. Complex I functions in the transfer of electrons from NADH to the respiratory chain. The immediate electron acceptor for the enzyme is believed to be ubiquinone. The protein is NADH-ubiquinone oxidoreductase chain 4L (ND4L) of Trimorphomyces papilionaceus (Jelly fungus).